The chain runs to 420 residues: Dynein axonemal assembly factor 4 (420 aa).

In terms of domain architecture, CS spans 3 to 87 (VRVSEFSWQQ…KEPVLWDSLS (85 aa)). A mediates interaction with ESR1 and STUB1 region spans residues 7 to 103 (EFSWQQTPAT…EMMQRIREKS (97 aa)). The segment covering 164-192 (ECQKKADGQKRVQRKEKPLEGKQAEETKA) has biased composition (basic and acidic residues). The tract at residues 164 to 212 (ECQKKADGQKRVQRKEKPLEGKQAEETKALKPRGLPRKAPPTRLPTRGR) is disordered. TPR repeat units follow at residues 288 to 321 (PDWL…NCKI), 322 to 355 (PLLY…LTPP), and 364 to 397 (MKAH…DPAN).

In terms of assembly, interacts with ZMYND10. Interacts with ESR1 and ESR2. Interacts with STUB1. Interacts with DNAAF2. Interacts with CCT3, CCT4, CCT5 and CCT8. Interacts with DNAAF6/PIH1D3.

Its subcellular location is the nucleus. The protein localises to the cytoplasm. The protein resides in the dynein axonemal particle. It is found in the cell projection. It localises to the neuron projection. Its function is as follows. Involved in neuronal migration during development of the cerebral neocortex. May regulate the stability and proteasomal degradation of the estrogen receptors that play an important role in neuronal differentiation, survival and plasticity. Axonemal dynein assembly factor required for ciliary motility. The polypeptide is Dynein axonemal assembly factor 4 (Mus musculus (Mouse)).